A 204-amino-acid chain; its full sequence is Small ribosomal subunit protein uS4 (204 aa).

The segment at 21–45 (GRPKSPINKREYGPGQHGQRRKKPS) is disordered. One can recognise an S4 RNA-binding domain in the interval 93-156 (RRLDAVVYRM…KQLAMVLDSV (64 aa)).

It belongs to the universal ribosomal protein uS4 family. In terms of assembly, part of the 30S ribosomal subunit. Contacts protein S5. The interaction surface between S4 and S5 is involved in control of translational fidelity.

Its function is as follows. One of the primary rRNA binding proteins, it binds directly to 16S rRNA where it nucleates assembly of the body of the 30S subunit. Functionally, with S5 and S12 plays an important role in translational accuracy. The chain is Small ribosomal subunit protein uS4 from Acidiphilium cryptum (strain JF-5).